The following is a 631-amino-acid chain: Phosphomethylpyrimidine synthase (631 aa).

Residues N239, M268, Y297, H333, 353–355 (SRG), 394–397 (DGLR), and E433 contribute to the substrate site. H437 is a Zn(2+) binding site. Y460 contacts substrate. H501 serves as a coordination point for Zn(2+). The [4Fe-4S] cluster site is built by C581, C584, and C589.

The protein belongs to the ThiC family. Homodimer. [4Fe-4S] cluster serves as cofactor.

The enzyme catalyses 5-amino-1-(5-phospho-beta-D-ribosyl)imidazole + S-adenosyl-L-methionine = 4-amino-2-methyl-5-(phosphooxymethyl)pyrimidine + CO + 5'-deoxyadenosine + formate + L-methionine + 3 H(+). The protein operates within cofactor biosynthesis; thiamine diphosphate biosynthesis. In terms of biological role, catalyzes the synthesis of the hydroxymethylpyrimidine phosphate (HMP-P) moiety of thiamine from aminoimidazole ribotide (AIR) in a radical S-adenosyl-L-methionine (SAM)-dependent reaction. This Escherichia coli O45:K1 (strain S88 / ExPEC) protein is Phosphomethylpyrimidine synthase.